The sequence spans 411 residues: Ferrochelatase, mitochondrial (411 aa).

A mitochondrion-targeting transit peptide spans 1–41 (MAAFRAAHRLLGHILRNESSAGLVTQRWSSSAAVASVPKSS). A disordered region spans residues 34-55 (VASVPKSSDPKPHAQPDKRKPK). Residues 41-51 (SDPKPHAQPDK) show a composition bias toward basic and acidic residues. Residues Arg-102, Tyr-110, and Ser-117 each coordinate protoporphyrin IX. A [2Fe-2S] cluster-binding site is contributed by Cys-183. Active-site residues include His-217 and Asp-370. [2Fe-2S] cluster is bound by residues Cys-390, Cys-393, and Cys-398.

The protein belongs to the ferrochelatase family. Homodimer. Homotetramer. It depends on [2Fe-2S] cluster as a cofactor.

Its subcellular location is the mitochondrion inner membrane. The catalysed reaction is heme b + 2 H(+) = protoporphyrin IX + Fe(2+). The protein operates within porphyrin-containing compound metabolism; protoheme biosynthesis; protoheme from protoporphyrin-IX: step 1/1. Its function is as follows. Catalyzes the ferrous insertion into protoporphyrin IX. The polypeptide is Ferrochelatase, mitochondrial (Xenopus laevis (African clawed frog)).